The chain runs to 718 residues: K(+)-insensitive pyrophosphate-energized proton pump (718 aa).

The next 6 helical transmembrane spans lie at 6–26, 54–76, 81–103, 112–132, 133–153, and 168–188; these read AVLV…IWAI, LTRQ…WYLL, AIGF…HVSV, AASL…AITG, LLVA…LTVW, and VSLG…GGIF. Residue lysine 190 participates in substrate binding. Positions 193, 197, 220, and 223 each coordinate Mg(2+). 6 helical membrane-spanning segments follow: residues 240–260, 265–285, 300–320, 335–355, 385–405, and 413–433; these read AVTV…SDIL, LYPL…TFFV, GLIA…TLTV, GTNL…IVVI, GLAV…GGII, and LFGT…IVAL. Aspartate 441 is a Mg(2+) binding site. A run of 4 helical transmembrane segments spans residues 472-492, 524-544, 593-613, and 620-640; these read AVTK…LFAA, YVVA…GMAM, IIPS…VLLI, and AFAA…FVAI. Ca(2+)-binding residues include aspartate 650, aspartate 682, and aspartate 686. Lysine 689 contributes to the substrate binding site. The helical transmembrane segment at 695–715 threads the bilayer; that stretch reads AVNPAIKITNIVALLLLAVLA.

This sequence belongs to the H(+)-translocating pyrophosphatase (TC 3.A.10) family. K(+)-insensitive subfamily. Homodimer. The cofactor is Mg(2+).

The protein localises to the cell inner membrane. It carries out the reaction diphosphate + H2O + H(+)(in) = 2 phosphate + 2 H(+)(out). Functionally, proton pump that utilizes the energy of pyrophosphate hydrolysis as the driving force for proton movement across the membrane. Generates a proton motive force. In Brucella anthropi (strain ATCC 49188 / DSM 6882 / CCUG 24695 / JCM 21032 / LMG 3331 / NBRC 15819 / NCTC 12168 / Alc 37) (Ochrobactrum anthropi), this protein is K(+)-insensitive pyrophosphate-energized proton pump.